A 627-amino-acid polypeptide reads, in one-letter code: MACPF domain-containing protein At1g14780 (627 aa).

An MACPF domain is found at 1-339 (MSRDGGDVIE…PPLMDLQYFL (339 aa)).

Belongs to the complement C6/C7/C8/C9 (TC 1.C.39) family.

Negatively controls the salicylic acid (SA)-mediated pathway of programmed cell death in plant immunity. This Arabidopsis thaliana (Mouse-ear cress) protein is MACPF domain-containing protein At1g14780.